The sequence spans 428 residues: Histone deacetylase 3 (428 aa).

The tract at residues 3–316 is histone deacetylase; it reads KTVAYFYDPD…WTYETSLLVD (314 aa). 1D-myo-inositol 1,4,5,6-tetrakisphosphate contacts are provided by His-17, Gly-21, and Lys-25. Residue His-135 is part of the active site. Positions 170, 172, and 259 each coordinate Zn(2+). 1D-myo-inositol 1,4,5,6-tetrakisphosphate is bound at residue Arg-265. 2 stretches are compositionally biased toward basic and acidic residues: residues 386–405 and 415–428; these read SYERTDEPDPEERGSEDNYS and DGDHDNDKESDVEI. The disordered stretch occupies residues 386-428; the sequence is SYERTDEPDPEERGSEDNYSRPEASNEFYDGDHDNDKESDVEI.

The protein belongs to the histone deacetylase family. HD type 1 subfamily.

The protein resides in the nucleus. It is found in the chromosome. The protein localises to the cytoplasm. It localises to the cytosol. The enzyme catalyses N(6)-acetyl-L-lysyl-[histone] + H2O = L-lysyl-[histone] + acetate. The catalysed reaction is N(6)-acetyl-L-lysyl-[protein] + H2O = L-lysyl-[protein] + acetate. It catalyses the reaction N(6)-(2E)-butenoyl-L-lysyl-[protein] + H2O = (2E)-2-butenoate + L-lysyl-[protein]. It carries out the reaction N(6)-(2-hydroxyisobutanoyl)-L-lysyl-[protein] + H2O = 2-hydroxy-2-methylpropanoate + L-lysyl-[protein]. The enzyme catalyses N(6)-[(S)-lactoyl]-L-lysyl-[protein] + H2O = (S)-lactate + L-lysyl-[protein]. Its activity is regulated as follows. Inositol tetraphosphate (1D-myo-inositol 1,4,5,6-tetrakisphosphate) promotes the histone deacetylase activity by acting as an intermolecular glue between hdac3 and N-Cor repressor complex components. In terms of biological role, histone deacetylase that catalyzes the deacetylation of lysine residues on the N-terminal part of the core histones (H2A, H2B, H3 and H4), and some other non-histone substrates. Histone deacetylation gives a tag for epigenetic repression and plays an important role in transcriptional regulation, cell cycle progression and developmental events. Histone deacetylases act via the formation of large multiprotein complexes, such as N-Cor repressor complex, which activate the histone deacetylase activity. Participates in the BCL6 transcriptional repressor activity by deacetylating the H3 'Lys-27' (H3K27) on enhancer elements, antagonizing EP300 acetyltransferase activity and repressing proximal gene expression. Also functions as a deacetylase for non-histone targets. In addition to protein deacetylase activity, also acts as a protein-lysine deacylase by recognizing other acyl groups: catalyzes removal of (2E)-butenoyl (crotonyl), lactoyl (lactyl) and 2-hydroxyisobutanoyl (2-hydroxyisobutyryl) acyl groups from lysine residues, leading to protein decrotonylation, delactylation and de-2-hydroxyisobutyrylation, respectively. This is Histone deacetylase 3 (hdac3) from Xenopus tropicalis (Western clawed frog).